A 453-amino-acid polypeptide reads, in one-letter code: Probable exopolygalacturonase B (453 aa).

Positions 1 to 16 (MKFLALAALFASTVSS) are cleaved as a signal peptide. N-linked (GlcNAc...) asparagine glycans are attached at residues asparagine 185 and asparagine 225. The active-site Proton donor is the aspartate 255. Residues cysteine 257 and cysteine 274 are joined by a disulfide bond. N-linked (GlcNAc...) asparagine glycans are attached at residues asparagine 263 and asparagine 275. The active site involves histidine 278. 2 PbH1 repeats span residues 295-316 (IENV…RLKA) and 327-348 (INNV…VLDQ). Residues asparagine 302, asparagine 329, asparagine 354, and asparagine 366 are each glycosylated (N-linked (GlcNAc...) asparagine). A PbH1 3 repeat occupies 362–405 (PSRVNFTNIVFENIYGTSSGKHGKVVADLTCSPNAVCSGIRLKN). Cysteine 392 and cysteine 398 are disulfide-bonded. Asparagine 436 is a glycosylation site (N-linked (GlcNAc...) asparagine).

It belongs to the glycosyl hydrolase 28 family.

The protein resides in the secreted. It carries out the reaction [(1-&gt;4)-alpha-D-galacturonosyl](n) + H2O = alpha-D-galacturonate + [(1-&gt;4)-alpha-D-galacturonosyl](n-1). Functionally, specific in hydrolyzing the terminal glycosidic bond of polygalacturonic acid and oligogalacturonates. The sequence is that of Probable exopolygalacturonase B (pgxB) from Neosartorya fischeri (strain ATCC 1020 / DSM 3700 / CBS 544.65 / FGSC A1164 / JCM 1740 / NRRL 181 / WB 181) (Aspergillus fischerianus).